The sequence spans 208 residues: Small ribosomal subunit protein uS4 (208 aa).

Residues 95-159 (TIIDNIVYRA…LKKLIGSNIE (65 aa)) form the S4 RNA-binding domain.

Belongs to the universal ribosomal protein uS4 family. In terms of assembly, part of the 30S ribosomal subunit. Contacts protein S5. The interaction surface between S4 and S5 is involved in control of translational fidelity.

One of the primary rRNA binding proteins, it binds directly to 16S rRNA where it nucleates assembly of the body of the 30S subunit. Its function is as follows. With S5 and S12 plays an important role in translational accuracy. This chain is Small ribosomal subunit protein uS4, found in Borreliella afzelii (strain PKo) (Borrelia afzelii).